A 162-amino-acid polypeptide reads, in one-letter code: NAD(P)H-quinone oxidoreductase subunit N (162 aa).

Belongs to the complex I NdhN subunit family. As to quaternary structure, NDH-1 can be composed of about 15 different subunits; different subcomplexes with different compositions have been identified which probably have different functions.

The protein localises to the cellular thylakoid membrane. The catalysed reaction is a plastoquinone + NADH + (n+1) H(+)(in) = a plastoquinol + NAD(+) + n H(+)(out). The enzyme catalyses a plastoquinone + NADPH + (n+1) H(+)(in) = a plastoquinol + NADP(+) + n H(+)(out). Its function is as follows. NDH-1 shuttles electrons from an unknown electron donor, via FMN and iron-sulfur (Fe-S) centers, to quinones in the respiratory and/or the photosynthetic chain. The immediate electron acceptor for the enzyme in this species is believed to be plastoquinone. Couples the redox reaction to proton translocation, and thus conserves the redox energy in a proton gradient. Cyanobacterial NDH-1 also plays a role in inorganic carbon-concentration. The chain is NAD(P)H-quinone oxidoreductase subunit N from Trichormus variabilis (strain ATCC 29413 / PCC 7937) (Anabaena variabilis).